The chain runs to 296 residues: MLVALAAIGVTVLLFLIKALGSGAKKAPVTLLDPNAKYPLPLIEKQEISHDTKKFRFGLPSAEHVLGLPVGQHIYLSAKVNGSLVVRAYTPVSSDEVKGHVDLVVKVYYKNVNPKFPDGGKMSQHLDSLKIGETIDFRGPNGLLVYKGKGKFAIRPDKKAEPKIKVAKHVGMLAGGTGITPMLQLIRQITQDPNDNTKCYLIFANQTEDDILLRYELETVAKSHPEQFKLWYTLDRPPQGWKYGSGFVTADMIKEHLPPPSEDVLVLMCGPPPMIQFACQDNLTKLGYPEAGRFAY.

A helical transmembrane segment spans residues 2–24 (LVALAAIGVTVLLFLIKALGSGA). The FAD-binding FR-type domain occupies 35 to 147 (NAKYPLPLIE…RGPNGLLVYK (113 aa)). FAD contacts are provided by residues 127–142 (DSLK…GPNG) and 166–201 (VAKH…KCYL).

Belongs to the flavoprotein pyridine nucleotide cytochrome reductase family. The cofactor is FAD.

It localises to the membrane. It catalyses the reaction 2 Fe(III)-[cytochrome b5] + NADH = 2 Fe(II)-[cytochrome b5] + NAD(+) + H(+). NADH-cytochrome b5 reductases are involved in desaturation and elongation of fatty acids, cholesterol biosynthesis and drug metabolism. This is NADH-cytochrome b5 reductase 2 (cyb5r2) from Xenopus laevis (African clawed frog).